The primary structure comprises 187 residues: Transcriptional repressor NrdR (187 aa).

Positions 1–21 (MQCPYCQHTNSRVLESRSSEG) are disordered. Residues 3 to 34 (CPYCQHTNSRVLESRSSEGGQSIRRRRECLNC) fold into a zinc finger. An ATP-cone domain is found at 49 to 139 (ITVIKHDGKK…VYGRFKGIKD (91 aa)). Composition is skewed to polar residues over residues 152 to 162 (ISSPMSQWSKS) and 170 to 187 (SQTSPCLSLTHNGSENSR). The disordered stretch occupies residues 152–187 (ISSPMSQWSKSSTRDRDQSQTSPCLSLTHNGSENSR).

The protein belongs to the NrdR family. Zn(2+) is required as a cofactor.

Its function is as follows. Negatively regulates transcription of bacterial ribonucleotide reductase nrd genes and operons by binding to NrdR-boxes. The chain is Transcriptional repressor NrdR from Crocosphaera subtropica (strain ATCC 51142 / BH68) (Cyanothece sp. (strain ATCC 51142)).